The primary structure comprises 532 residues: MKKIMLIASAMSALSLPFSASAIELEDEVGLECGPYAKVGVVGGMITGAESTRLDSTDSEGKKHLSLTTGLPFGGTLAAGMTIAPGFRAELGVMYLRNISAEVEVGKGEVDSKGEIKADSGGGTDAPIRKPFKLTPPQPTMMPISIADRDFGIDIPNIPQAQAQAAQPPLNDQKRAAARIAWLKNCAGIDYMVKDPNNPGHMMVNPVLLNIPQGNPNPVGQPPQRANQPANFAIHNHEQWRSLVVGLAALSNANKPSASPVKVLSDKIIQIYSDIKPFADIAGINVPDTGLPNSASIEQIQSKIQELGDTLEELRDSFDGYINNAFVNQIHLNFVMPPQAQQQQGQGQQQQAQATAQEAVAAAAVRLLNGSDQIAQLYKDLVKLQRHAGIRKAMEKLAAQQEEDAKNQGKGDCKQQQGASEKSKEGKVKETEFDLSMVVGQVKLYADLVTTESFSIYGGVGAGLAYTYGKIDNKDVKGYTGMVASGALGVAINAAEGVCVDLEAGYMHSFSKVEDKYQVNAFIASACVRYNF.

The N-terminal stretch at Met-1 to Ala-22 is a signal peptide. The helical transmembrane segment at Leu-67–Phe-87 threads the bilayer. 2 disordered regions span residues Lys-113 to Thr-140 and Gln-400 to Gly-426. A compositionally biased stretch (basic and acidic residues) spans Glu-403 to Cys-413. Residues Thr-480–Val-500 form a helical membrane-spanning segment.

The protein resides in the cell membrane. May be an adherent factor for rickettsial adsorption to the host-cell surface and a determinant of virulence of individual rickettsial strain. It is the major outer membrane protein. The chain is 56 kDa type-specific antigen from Orientia tsutsugamushi (Rickettsia tsutsugamushi).